We begin with the raw amino-acid sequence, 233 residues long: Ras-related protein Rab-20 (233 aa).

5 residues coordinate GTP: Gly-17, Lys-18, Thr-19, Asp-32, and Thr-36. Residue Thr-19 coordinates Mg(2+). Short sequence motifs (switch) lie at residues 28–41 and 55–72; these read RRFPDTVSTVGGAF and DTAGREQFHGLGSLYCRG. Thr-36 and Asp-55 together coordinate Mg(2+). GTP is bound by residues Gly-58, Asn-113, Lys-114, and Asp-116. The span at 119–130 shows a compositional bias: basic and acidic residues; it reads SERDTEGGEKEG. Residues 119-138 form a disordered region; it reads SERDTEGGEKEGPASGKVGS. 2 residues coordinate GTP: Ala-183 and Lys-184. Residues Cys-231 and Cys-232 are each lipidated (S-geranylgeranyl cysteine).

This sequence belongs to the small GTPase superfamily. Rab family. Mg(2+) serves as cofactor. As to expression, present in a variety of tissues, but not in brain.

The protein localises to the cytoplasmic vesicle. The protein resides in the phagosome. It is found in the phagosome membrane. It localises to the golgi apparatus. The enzyme catalyses GTP + H2O = GDP + phosphate + H(+). Regulated by guanine nucleotide exchange factors (GEFs) which promote the exchange of bound GDP for free GTP. Regulated by GTPase activating proteins (GAPs) which increase the GTP hydrolysis activity. Inhibited by GDP dissociation inhibitors (GDIs). Functionally, plays a role in apical endocytosis/recycling. Plays a role in the maturation and acidification of phagosomes that engulf pathogens, such as S.aureus and Mycobacterium. Plays a role in the fusion of phagosomes with lysosomes. This is Ras-related protein Rab-20 from Mus musculus (Mouse).